The following is an 80-amino-acid chain: Sulfur carrier protein TusA (80 aa).

Cys-17 (cysteine persulfide intermediate) is an active-site residue.

It belongs to the sulfur carrier protein TusA family.

The protein localises to the cytoplasm. Its function is as follows. Sulfur carrier protein which probably makes part of a sulfur-relay system. This is Sulfur carrier protein TusA from Pseudomonas putida (strain GB-1).